Consider the following 373-residue polypeptide: Ferroptosis suppressor protein 1 (373 aa).

Residue Gly-2 is the site of N-myristoyl glycine attachment. Residues 7–27 form a helical membrane-spanning segment; sequence VDTGAVHVVIVGGGFGGIAAA. 6-hydroxy-FAD-binding positions include 18-22, Arg-54, and Val-82; that span reads GGGFG. Lys-168 bears the N6-acetyllysine mark. Asp-285 serves as a coordination point for 6-hydroxy-FAD.

Belongs to the FAD-dependent oxidoreductase family. As to quaternary structure, interacts with importin subunits KPNA2 and IPO5; this interaction likely mediates the translocation into the nucleus upon oxidative stress. The cofactor is 6-hydroxy-FAD. In terms of processing, N-myristoylation at Gly-2 mediates the recruitment to lipid droplets and plasma membrane. Acetylation at Lys-168 prevents AIFM2 ubiquitination and degradation, thereby inhibiting ferroptosis. KAT2B mediates acetylation at Lys-168, while HDAC3 removes it. Post-translationally, ubiquitinated. AIFM2 undergoes 'Lys-29'-ubiquitination and proteasomal degradation, which is inhibited by acetylation at Lys-168. In terms of tissue distribution, detected in most normal tissues as two transcripts of 1.8 and 4.0 kb in length, respectively. Highly expressed in liver, testis, and kidney, and expressed at lower levels in pancreas, spleen, brain and lung. Expressed in heart (at protein level).

The protein localises to the lipid droplet. The protein resides in the cell membrane. It is found in the cytoplasm. It localises to the mitochondrion membrane. Its subcellular location is the nucleus. The enzyme catalyses ubiquinone-10 + NADH + H(+) = ubiquinol-10 + NAD(+). The catalysed reaction is phylloquinone + NADH + H(+) = phylloquinol + NAD(+). It carries out the reaction menaquinone-4 + NADH + H(+) = menaquinol-4 + NAD(+). It catalyses the reaction menadione + NADH + H(+) = menadiol + NAD(+). Its activity is regulated as follows. The modification by 4-hydroxy-2-nonenal (HNE) adduction in mitochondria results in loss of the oxidoreductase activity and activation of a novel function in mitochondrial oxidative stress signaling. Its function is as follows. An NAD(P)H-dependent oxidoreductase that acts as a key inhibitor of ferroptosis. At the plasma membrane, catalyzes reduction of coenzyme Q/ubiquinone-10 to ubiquinol-10, a lipophilic radical-trapping antioxidant that prevents lipid oxidative damage and consequently ferroptosis. Acts in parallel to GPX4 to suppress phospholipid peroxidation and ferroptosis. This anti-ferroptotic function is independent of cellular glutathione levels. Also acts as a potent radical-trapping antioxidant by mediating warfarin-resistant vitamin K reduction in the canonical vitamin K cycle: catalyzes NAD(P)H-dependent reduction of vitamin K (phylloquinone, menaquinone-4 and menadione) to hydroquinone forms. Hydroquinones act as potent radical-trapping antioxidants inhibitor of phospholipid peroxidation and ferroptosis. May play a role in mitochondrial stress signaling. Upon oxidative stress, associates with the lipid peroxidation end product 4-hydroxy-2-nonenal (HNE) forming a lipid adduct devoid of oxidoreductase activity, which then translocates from mitochondria into the nucleus triggering DNA damage and cell death. The polypeptide is Ferroptosis suppressor protein 1 (Mus musculus (Mouse)).